The sequence spans 70 residues: MKAGIHPDYAEITATCTCGNVIKINSTVGKDLHLDVCGACHPFYTGTQKVMDTGGRIDKFNKRFGALGKK.

Zn(2+) is bound by residues Cys16, Cys18, Cys37, and Cys40.

The protein belongs to the bacterial ribosomal protein bL31 family. Type A subfamily. In terms of assembly, part of the 50S ribosomal subunit. It depends on Zn(2+) as a cofactor.

In terms of biological role, binds the 23S rRNA. This chain is Large ribosomal subunit protein bL31, found in Shewanella halifaxensis (strain HAW-EB4).